The following is a 134-amino-acid chain: Tripartite terminase subunit 2 (134 aa).

The protein belongs to the herpesviridae TRM2 protein family. Associates with TRM1 and TRM3 to form the tripartite terminase complex.

It is found in the host nucleus. Component of the molecular motor that translocates viral genomic DNA in empty capsid during DNA packaging. Forms a tripartite terminase complex together with TRM1 and TRM3 in the host cytoplasm. Once the complex reaches the host nucleus, it interacts with the capsid portal vertex. This portal forms a ring in which genomic DNA is translocated into the capsid. The protein is Tripartite terminase subunit 2 of Gallus gallus (Chicken).